The chain runs to 211 residues: Thiamine-phosphate synthase (211 aa).

4-amino-2-methyl-5-(diphosphooxymethyl)pyrimidine-binding positions include 37–41 (QLRIK) and Asn69. The Mg(2+) site is built by Asp70 and Asp89. Ser108 is a 4-amino-2-methyl-5-(diphosphooxymethyl)pyrimidine binding site. Position 134–136 (134–136 (TQT)) interacts with 2-[(2R,5Z)-2-carboxy-4-methylthiazol-5(2H)-ylidene]ethyl phosphate. Lys137 provides a ligand contact to 4-amino-2-methyl-5-(diphosphooxymethyl)pyrimidine. 2-[(2R,5Z)-2-carboxy-4-methylthiazol-5(2H)-ylidene]ethyl phosphate contacts are provided by residues Gly166 and 186 to 187 (VS).

It belongs to the thiamine-phosphate synthase family. The cofactor is Mg(2+).

It carries out the reaction 2-[(2R,5Z)-2-carboxy-4-methylthiazol-5(2H)-ylidene]ethyl phosphate + 4-amino-2-methyl-5-(diphosphooxymethyl)pyrimidine + 2 H(+) = thiamine phosphate + CO2 + diphosphate. It catalyses the reaction 2-(2-carboxy-4-methylthiazol-5-yl)ethyl phosphate + 4-amino-2-methyl-5-(diphosphooxymethyl)pyrimidine + 2 H(+) = thiamine phosphate + CO2 + diphosphate. The catalysed reaction is 4-methyl-5-(2-phosphooxyethyl)-thiazole + 4-amino-2-methyl-5-(diphosphooxymethyl)pyrimidine + H(+) = thiamine phosphate + diphosphate. The protein operates within cofactor biosynthesis; thiamine diphosphate biosynthesis; thiamine phosphate from 4-amino-2-methyl-5-diphosphomethylpyrimidine and 4-methyl-5-(2-phosphoethyl)-thiazole: step 1/1. Condenses 4-methyl-5-(beta-hydroxyethyl)thiazole monophosphate (THZ-P) and 2-methyl-4-amino-5-hydroxymethyl pyrimidine pyrophosphate (HMP-PP) to form thiamine monophosphate (TMP). In Shigella sonnei (strain Ss046), this protein is Thiamine-phosphate synthase.